A 525-amino-acid polypeptide reads, in one-letter code: 2-isopropylmalate synthase (525 aa).

The 263-residue stretch at 5 to 267 (VIIFDTTLRD…HTGIHHQEIY (263 aa)) folds into the Pyruvate carboxyltransferase domain. D14, H202, H204, and N238 together coordinate Mn(2+). The tract at residues 392–525 (RLEYFSVQSS…NNSQDMQETV (134 aa)) is regulatory domain.

The protein belongs to the alpha-IPM synthase/homocitrate synthase family. LeuA type 1 subfamily. As to quaternary structure, homodimer. It depends on Mn(2+) as a cofactor.

It is found in the cytoplasm. It catalyses the reaction 3-methyl-2-oxobutanoate + acetyl-CoA + H2O = (2S)-2-isopropylmalate + CoA + H(+). Its pathway is amino-acid biosynthesis; L-leucine biosynthesis; L-leucine from 3-methyl-2-oxobutanoate: step 1/4. Functionally, catalyzes the condensation of the acetyl group of acetyl-CoA with 3-methyl-2-oxobutanoate (2-ketoisovalerate) to form 3-carboxy-3-hydroxy-4-methylpentanoate (2-isopropylmalate). The protein is 2-isopropylmalate synthase of Sodalis glossinidius (strain morsitans).